A 226-amino-acid polypeptide reads, in one-letter code: Large ribosomal subunit protein uL1 (226 aa).

This sequence belongs to the universal ribosomal protein uL1 family. In terms of assembly, part of the 50S ribosomal subunit.

In terms of biological role, binds directly to 23S rRNA. The L1 stalk is quite mobile in the ribosome, and is involved in E site tRNA release. Protein L1 is also a translational repressor protein, it controls the translation of the L11 operon by binding to its mRNA. The chain is Large ribosomal subunit protein uL1 from Mycoplasma mycoides subsp. mycoides SC (strain CCUG 32753 / NCTC 10114 / PG1).